Consider the following 541-residue polypeptide: Eukaryotic translation initiation factor 3 subunit L (541 aa).

Positions Thr308 to His516 constitute a PCI domain.

It belongs to the eIF-3 subunit L family. Component of the eukaryotic translation initiation factor 3 (eIF-3) complex. The eIF-3 complex interacts with pix.

The protein resides in the cytoplasm. In terms of biological role, component of the eukaryotic translation initiation factor 3 (eIF-3) complex, which is involved in protein synthesis of a specialized repertoire of mRNAs and, together with other initiation factors, stimulates binding of mRNA and methionyl-tRNAi to the 40S ribosome. The eIF-3 complex specifically targets and initiates translation of a subset of mRNAs involved in cell proliferation. The sequence is that of Eukaryotic translation initiation factor 3 subunit L from Drosophila persimilis (Fruit fly).